Reading from the N-terminus, the 233-residue chain is Ion-translocating oxidoreductase complex subunit E (233 aa).

A run of 6 helical transmembrane segments spans residues 18 to 38, 39 to 59, 69 to 89, 92 to 112, 128 to 148, and 182 to 202; these read ALVQ…ATNA, LGLG…VSAL, IPIY…LINA, FGLY…CIVI, ALDG…LGAL, and PFLL…LLAG.

Belongs to the NqrDE/RnfAE family. As to quaternary structure, the complex is composed of six subunits: RnfA, RnfB, RnfC, RnfD, RnfE and RnfG.

The protein resides in the cell inner membrane. Functionally, part of a membrane-bound complex that couples electron transfer with translocation of ions across the membrane. This chain is Ion-translocating oxidoreductase complex subunit E, found in Yersinia pseudotuberculosis serotype IB (strain PB1/+).